The chain runs to 253 residues: Ubiquinone biosynthesis O-methyltransferase (253 aa).

The S-adenosyl-L-methionine site is built by arginine 41, glycine 72, aspartate 93, and leucine 136.

Belongs to the methyltransferase superfamily. UbiG/COQ3 family.

The catalysed reaction is a 3-demethylubiquinol + S-adenosyl-L-methionine = a ubiquinol + S-adenosyl-L-homocysteine + H(+). It catalyses the reaction a 3-(all-trans-polyprenyl)benzene-1,2-diol + S-adenosyl-L-methionine = a 2-methoxy-6-(all-trans-polyprenyl)phenol + S-adenosyl-L-homocysteine + H(+). The protein operates within cofactor biosynthesis; ubiquinone biosynthesis. Functionally, O-methyltransferase that catalyzes the 2 O-methylation steps in the ubiquinone biosynthetic pathway. This Azorhizobium caulinodans (strain ATCC 43989 / DSM 5975 / JCM 20966 / LMG 6465 / NBRC 14845 / NCIMB 13405 / ORS 571) protein is Ubiquinone biosynthesis O-methyltransferase.